The primary structure comprises 155 residues: V-type proton ATPase 16 kDa proteolipid subunit c (155 aa).

Residues 1-10 (MSEAKNGPEY) are Lumenal-facing. Residues 11 to 33 (ASFFAVMGASAAMVFSALGAAYG) form a helical membrane-spanning segment. Residues 34 to 55 (TAKSGTGIAAMSVMRPEMIMKS) lie on the Cytoplasmic side of the membrane. Residues 56–76 (IIPVVMAGIIAIYGLVVAVLI) form a helical membrane-spanning segment. At 77–92 (ANSLNDGISLYRSFLQ) the chain is on the lumenal side. The chain crosses the membrane as a helical span at residues 93–114 (LGAGLSVGLSGLAAGFAIGIVG). Residues 115-131 (DAGVRGTAQQPRLFVGM) lie on the Cytoplasmic side of the membrane. Residues 132 to 152 (ILILIFAEVLGLYGLIVALIL) traverse the membrane as a helical segment. Topologically, residues 153–155 (STK) are lumenal.

Belongs to the V-ATPase proteolipid subunit family. In terms of assembly, V-ATPase is a heteromultimeric enzyme made up of two complexes: the ATP-hydrolytic V1 complex and the proton translocation V0 complex. The V1 complex consists of three catalytic AB heterodimers that form a heterohexamer, three peripheral stalks each consisting of EG heterodimers, one central rotor including subunits D and F, and the regulatory subunits C and H. The proton translocation complex V0 consists of the proton transport subunit a, a ring of proteolipid subunits c9c'', rotary subunit d, subunits e and f, and the accessory subunits ATP6AP1/Ac45 and ATP6AP2/PRR. Interacts with the V0 complex V-ATPase subunit a4 ATP6V0A4. Interacts with LASS2. Interacts with RNF182; this interaction leads to ubiquitination and degradation via the proteasome pathway. Post-translationally, ubiquitinated by RNF182, leading to its degradation via the ubiquitin-proteasome pathway. Expressed in brain (at protein level).

The protein resides in the cytoplasmic vesicle. It is found in the clathrin-coated vesicle membrane. It localises to the secretory vesicle. Its subcellular location is the synaptic vesicle membrane. Proton-conducting pore forming subunit of the V0 complex of vacuolar(H+)-ATPase (V-ATPase), a multisubunit enzyme composed of a peripheral complex (V1) that hydrolyzes ATP and a membrane integral complex (V0) that translocates protons. V-ATPase is responsible for acidifying and maintaining the pH of intracellular compartments and in some cell types, is targeted to the plasma membrane, where it is responsible for acidifying the extracellular environment. The chain is V-type proton ATPase 16 kDa proteolipid subunit c (ATP6V0C) from Bos taurus (Bovine).